The sequence spans 156 residues: Small ribosomal subunit protein uS7 (156 aa).

The protein belongs to the universal ribosomal protein uS7 family. In terms of assembly, part of the 30S ribosomal subunit. Contacts proteins S9 and S11.

In terms of biological role, one of the primary rRNA binding proteins, it binds directly to 16S rRNA where it nucleates assembly of the head domain of the 30S subunit. Is located at the subunit interface close to the decoding center, probably blocks exit of the E-site tRNA. The sequence is that of Small ribosomal subunit protein uS7 from Prochlorococcus marinus (strain MIT 9301).